The following is a 171-amino-acid chain: Co-chaperone protein HscB homolog (171 aa).

In terms of domain architecture, J spans 2-74 (NYFELFGLPI…LRRAEYLLSL (73 aa)).

Belongs to the HscB family. Interacts with HscA and stimulates its ATPase activity.

In terms of biological role, co-chaperone involved in the maturation of iron-sulfur cluster-containing proteins. Seems to help targeting proteins to be folded toward HscA. The sequence is that of Co-chaperone protein HscB homolog from Vibrio cholerae serotype O1 (strain ATCC 39541 / Classical Ogawa 395 / O395).